Here is a 177-residue protein sequence, read N- to C-terminus: ATP synthase subunit delta (177 aa).

Belongs to the ATPase delta chain family. F-type ATPases have 2 components, F(1) - the catalytic core - and F(0) - the membrane proton channel. F(1) has five subunits: alpha(3), beta(3), gamma(1), delta(1), epsilon(1). F(0) has three main subunits: a(1), b(2) and c(10-14). The alpha and beta chains form an alternating ring which encloses part of the gamma chain. F(1) is attached to F(0) by a central stalk formed by the gamma and epsilon chains, while a peripheral stalk is formed by the delta and b chains.

The protein resides in the cell membrane. Functionally, f(1)F(0) ATP synthase produces ATP from ADP in the presence of a proton or sodium gradient. F-type ATPases consist of two structural domains, F(1) containing the extramembraneous catalytic core and F(0) containing the membrane proton channel, linked together by a central stalk and a peripheral stalk. During catalysis, ATP synthesis in the catalytic domain of F(1) is coupled via a rotary mechanism of the central stalk subunits to proton translocation. This protein is part of the stalk that links CF(0) to CF(1). It either transmits conformational changes from CF(0) to CF(1) or is implicated in proton conduction. The chain is ATP synthase subunit delta from Buchnera aphidicola subsp. Acyrthosiphon pisum (strain APS) (Acyrthosiphon pisum symbiotic bacterium).